Reading from the N-terminus, the 231-residue chain is Thermonuclease (231 aa).

Positions 1–26 (MLVMTEYLLSAGICMAIVSILLIGMA) are cleaved as a signal peptide. Propeptides lie at residues 27–63 (ISNV…SANA) and 64–82 (SQTD…TVYS). Residues 61-73 (ANASQTDNGVNRS) are compositionally biased toward polar residues. The disordered stretch occupies residues 61–86 (ANASQTDNGVNRSGSEDPTVYSATST). Asp103 provides a ligand contact to Ca(2+). Arg117 is a catalytic residue. Residues Asp122 and Thr123 each coordinate Ca(2+). Catalysis depends on residues Glu125 and Arg169. Positions 203–219 (HEQHLRKSEAQAKKEKL) are enriched in basic and acidic residues. Residues 203 to 231 (HEQHLRKSEAQAKKEKLNIWSEDNADSGQ) form a disordered region.

Belongs to the thermonuclease family. Ca(2+) is required as a cofactor.

Its subcellular location is the secreted. It is found in the membrane. The enzyme catalyses Endonucleolytic cleavage to nucleoside 3'-phosphates and 3'-phosphooligonucleotide end-products.. Its function is as follows. Enzyme that catalyzes the hydrolysis of both DNA and RNA at the 5' position of the phosphodiester bond. The chain is Thermonuclease from Staphylococcus aureus.